The chain runs to 266 residues: Integral membrane protein 2B (266 aa).

Residues 1–54 (MVKVTFNSALAQKEAKKDEPKSSEEALIAPPDAVAVDCKDPDDVVPVGQRRAWC) lie on the Cytoplasmic side of the membrane. A helical; Signal-anchor for type II membrane protein membrane pass occupies residues 55 to 75 (WCMCFGLAFMLAGVILGGAYL). Residues 76-266 (YKYFALQPDD…KFAVETLICS (191 aa)) are Lumenal-facing. The necessary for interaction with APP and inhibitor effects on APP processing stretch occupies residues 102–134 (EPSADAPAARYQTIEENIKIFEEDAVEFISVPV). The 95-residue stretch at 137-231 (FADSDPANIV…LCHDKETYKL (95 aa)) folds into the BRICHOS domain. 2 disulfides stabilise this stretch: cysteine 164–cysteine 223 and cysteine 248–cysteine 265. Asparagine 170 carries N-linked (GlcNAc...) asparagine glycosylation.

It belongs to the ITM2 family. As to quaternary structure, homodimer; disulfide-linked. Interacts with SPPL2A and SPPL2B. Interacts with APP. Mature BRI2 (mBRI2) interacts with the APP amyloid-beta A4 protein; the interaction occurs at the cell surface and in the endocytic compartments and enable alpha- and beta-secretase-induced APP cleavage inhibition. Mature BRI2 (mBRI2) interacts with the APP C99; the interaction occurs in the endocytic compartments and enable gamma-secretase-induced C99 cleavage inhibition. May form heterodimers with Bri23 peptide and APP amyloid-beta protein 40. Interacts with ADAM7 in sperm; the interaction increases following capacitation. Post-translationally, the ectodomain C-terminal part of the imBRI2 is processed by furin producing a secreted Bri23 peptide and a mature BRI2, membrane form (mBRI2). The remaining part of the ectodomain of mBRI2 containing the BRICHOS domain is cleaved by ADAM10 and is secreted (BRI2C, soluble form). The membrane-bound N-terminal fragment (BRI2C, membrane form) is further proteolytically processed by SPPL2A and SPPL2B through regulated intramembrane proteolysis producing a secreted C-peptide and a BRI2 intracellular domain (BRI2 ICD) released in the cytosol. Shedding by ADAM10 facilitates intramembrane cleavage but is not absolutely required for BRI2 ICD generation. In terms of processing, glycosylation at Asn-170 is important for cell surface localization, but doesn't affect furin- and ADAM10-induced proteolytic processing.

Its subcellular location is the golgi apparatus membrane. It is found in the cell membrane. It localises to the endosome membrane. The protein resides in the secreted. Its function is as follows. Plays a regulatory role in the processing of the amyloid-beta A4 precursor protein (APP) and acts as an inhibitor of the amyloid-beta peptide aggregation and fibrils deposition. Plays a role in the induction of neurite outgrowth. Functions as a protease inhibitor by blocking access of secretases to APP cleavage sites. Mature BRI2 (mBRI2) functions as a modulator of the amyloid-beta A4 precursor protein (APP) processing leading to a strong reduction in the secretion of secretase-processed amyloid-beta protein 40 and amyloid-beta protein 42. Functionally, bri23 peptide prevents aggregation of APP amyloid-beta protein 42 into toxic oligomers. In Rattus norvegicus (Rat), this protein is Integral membrane protein 2B (Itm2b).